A 752-amino-acid polypeptide reads, in one-letter code: Iron-sulfur clusters transporter ABCB7, mitochondrial (752 aa).

The N-terminal 22 residues, 1-22, are a transit peptide targeting the mitochondrion; that stretch reads MALLAIHSWRWAAAAVAFEKHK. Residues 23–140 are Mitochondrial matrix-facing; the sequence is HSAVLTRSLV…KDRPDLRARV (118 aa). One can recognise an ABC transmembrane type-1 domain in the interval 140–436; that stretch reads VAISLGFLGG…LGTVYRETRQ (297 aa). The helical transmembrane segment at 141–161 threads the bilayer; it reads AISLGFLGGAKAMNIVVPFMF. At 162–185 the chain is on the mitochondrial intermembrane side; it reads KYAVDSLNQMSGNMLNLSDAPNTV. The helical transmembrane segment at 186–206 threads the bilayer; that stretch reads ATMATAVLIGYGVSRAGAAFF. Residues 207-259 are Mitochondrial matrix-facing; that stretch reads NEVRNAVFGKVAQNSIRRIAKNVFLHLHNLDLGFHLSRQTGALSKAIDRGTRG. N6-acetyllysine is present on residues K216 and K251. Residues 260–280 form a helical membrane-spanning segment; that stretch reads ISFVLSALVFNLLPIVFEMTL. At 281–290 the chain is on the mitochondrial intermembrane side; it reads VSSVLYYKCG. Residues 291-311 form a helical membrane-spanning segment; sequence AQFALVTLGTLGAYTAFTVAV. Over 312 to 382 the chain is Mitochondrial matrix; that stretch reads TRWRTRFRIE…TLAMLNFGQS (71 aa). A glutathione-binding site is contributed by 315–319; the sequence is RTRFR. The residue at position 336 (S336) is a Phosphoserine. Y340 carries the post-translational modification Phosphotyrosine. T342 is modified (phosphothreonine). The residue at position 350 (K350) is an N6-acetyllysine. Position 378 to 381 (378 to 381) interacts with glutathione; sequence NFGQ. A helical transmembrane segment spans residues 383–403; sequence AIFSVGLTAIMVLASQGIVAG. The Mitochondrial intermembrane segment spans residues 404–409; sequence ALTVGD. A helical membrane pass occupies residues 410 to 430; the sequence is LVMVNGLLFQLSLPLNFLGTV. Glutathione is bound at residue G428. The Mitochondrial matrix segment spans residues 431-752; the sequence is YRETRQALID…SVKGCGNCSC (322 aa). Residues 472–706 enclose the ABC transporter domain; that stretch reads VAFDNVHFEY…SSSIYSEMWH (235 aa). Residues Y481 and 505–516 contribute to the ATP site; that span reads GGSGSGKSTIVR.

Belongs to the ABC transporter superfamily. ABCB family. Heavy Metal importer (TC 3.A.1.210) subfamily. Homodimer or heterodimer. Interacts with C10orf88/PAAT. Forms a complex with ABCB10 and FECH, where a dimeric FECH bridges ABCB7 and ABCB10 homodimers; this complex may be required for cellular iron homeostasis, mitochondrial function and heme biosynthesis. Interacts with FECH. Interacts with ATP5F1A. Interacts with COX4I1; this interaction allows the regulation of cellular iron homeostasis and cellular reactive oxygen species (ROS) levels in cardiomyocytes.

It localises to the mitochondrion inner membrane. The enzyme catalyses (glutathione)4[2Fe(III)-2S] cluster(in) + ATP + H2O = (glutathione)4[2Fe(III)-2S] cluster(out) + ADP + phosphate + H(+). Exports glutathione-coordinated iron-sulfur clusters such as [2Fe-2S]-(GS)4 cluster from the mitochondria to the cytosol in an ATP-dependent manner allowing the assembly of the cytosolic iron-sulfur (Fe/S) cluster-containing proteins and participates in iron homeostasis. Moreover, through a functional complex formed of ABCB7, FECH and ABCB10, also plays a role in the cellular iron homeostasis, mitochondrial function and heme biosynthesis. In cardiomyocytes, regulates cellular iron homeostasis and cellular reactive oxygen species (ROS) levels through its interaction with COX4I1. May also play a role in hematopoiesis. This chain is Iron-sulfur clusters transporter ABCB7, mitochondrial, found in Rattus norvegicus (Rat).